Here is a 375-residue protein sequence, read N- to C-terminus: Trans-enoyl reductase iccB (375 aa).

NADP(+) is bound at residue 48-51; sequence VDAK. 143 to 150 serves as a coordination point for substrate; that stretch reads AAVATVGL. NADP(+) is bound by residues 204–207, Tyr222, and 269–270; these read SSAS and LD. 289 to 293 provides a ligand contact to substrate; it reads TYSQF. Residue 358 to 359 coordinates NADP(+); the sequence is IK.

Belongs to the zinc-containing alcohol dehydrogenase family. As to quaternary structure, monomer.

The enzyme catalyses N-[(4E,6E,10S,12Z,14E)-6,10-dimethyl-3-oxohexadeca-4,6,12,14-tetraenoyl]-L-tyrosyl-[ACP] = (3E,5S)-3-[(2E,4E,8S,10E,12Z)-1-hydroxy-4,8-dimethyltetradeca-2,4,10,12-tetraen-1-ylidene]-5-[(4-hydroxyphenyl)methyl]pyrrolidine-2,4-dione + holo-[ACP] + H(+). It functions in the pathway mycotoxin biosynthesis. Functionally, trans-enoyl reductase; part of the gene cluster that mediates the biosynthesis of ilicicolin H, a 4-hydroxy-2-pyridonealkaloid that has potent and broad antifungal activities by inhibiting the mitochondrial respiration chain. IccB collaborates with the hybrid PKS-NRPS synthetase iccA to assemble the backbone of ilicicolin H. The PKS portion of iccA and trans-acting enoyl reductase iccB work together to construct an octaketide, and two methyl groups are introduced by the MT domain of iccA during the chain assembly. The nascent chain is then condensed with tyrosine, catalyzed by the iliA C domain, and the resulting PKS-NRPS hybrid is offloaded by the iliA RED domain to form an advanced tetramic acid intermediate. The biosynthesis of ilicicolin H starts with formation of the tetramic acid by the hybrid PKS-NRPS synthetase iccA with the partnering trans-enoyl reductase iccB since iccA lacks a designated enoylreductase (ER) domain. The cytochrome P450 monooxygenase iccC then catalyzes the ring expansion of the tetramate to the acyclic 2-pyridone. The pericyclase iccD further converts the acyclic 2-pyridone into 8-epi-ilicicolin H. Finally, the epimerase iccE converts 8-epi-ilicicolin H into ilicicolin H via epimerization. IccA to iccE are sufficient for ilicicolin H biosynthesis and the roles of the remaining enzymes, iccF, iccG and iccH within the pathway have still to be determined. In Talaromyces variabilis (Penicillium variabile), this protein is Trans-enoyl reductase iccB.